Consider the following 134-residue polypeptide: Profilin-2 (134 aa).

C13 and C118 are joined by a disulfide. The Involved in PIP2 interaction signature appears at 84–100 (AVIRGKKGSGGITIKKT). Position 114 is a phosphothreonine (T114).

Belongs to the profilin family. As to quaternary structure, occurs in many kinds of cells as a complex with monomeric actin in a 1:1 ratio. Post-translationally, phosphorylated by MAP kinases.

The protein localises to the cytoplasm. It localises to the cytoskeleton. In terms of biological role, binds to actin and affects the structure of the cytoskeleton. At high concentrations, profilin prevents the polymerization of actin, whereas it enhances it at low concentrations. The sequence is that of Profilin-2 from Olea europaea (Common olive).